The sequence spans 34 residues: Photosystem II reaction center protein M (34 aa).

A helical membrane pass occupies residues 5–25 (ILAVIATALFVLIPTAFLLIL).

Belongs to the PsbM family. In terms of assembly, PSII is composed of 1 copy each of membrane proteins PsbA, PsbB, PsbC, PsbD, PsbE, PsbF, PsbH, PsbI, PsbJ, PsbK, PsbL, PsbM, PsbT, PsbX, PsbY, PsbZ, Psb30/Ycf12, at least 3 peripheral proteins of the oxygen-evolving complex and a large number of cofactors. It forms dimeric complexes.

The protein resides in the plastid. The protein localises to the chloroplast thylakoid membrane. Its function is as follows. One of the components of the core complex of photosystem II (PSII). PSII is a light-driven water:plastoquinone oxidoreductase that uses light energy to abstract electrons from H(2)O, generating O(2) and a proton gradient subsequently used for ATP formation. It consists of a core antenna complex that captures photons, and an electron transfer chain that converts photonic excitation into a charge separation. This subunit is found at the monomer-monomer interface. In Chaetosphaeridium globosum (Charophycean green alga), this protein is Photosystem II reaction center protein M.